An 81-amino-acid chain; its full sequence is MRLFLSLLVVVLSIVLEGPTPAQGVPDVSNPFDVLEEFGKTLEDNVREFINLITQSELPAKTRDWFSETFRKVKEKLKINS.

A signal peptide spans 1–24; that stretch reads MRLFLSLLVVVLSIVLEGPTPAQG.

It belongs to the apolipoprotein C1 family.

The protein localises to the secreted. The protein is Apolipoprotein C-I, acidic form (APOC1A) of Cercocebus atys (Sooty mangabey).